Consider the following 356-residue polypeptide: Cyanuric acid amidohydrolase (356 aa).

The tract at residues 1–99 (MPIAKVHRIA…FLVFERAEGN (99 aa)) is RU A. Residues Arg-52 and 79 to 80 (SG) each bind substrate. The interval 106-243 (ALAIGRAHTP…HEIVVLGMSE (138 aa)) is RU B. Lys-156 is a catalytic residue. Residues Arg-188 and 226-227 (SS) contribute to the substrate site. Catalysis depends on Ser-226, which acts as the Nucleophile. An RU C region spans residues 249–356 (LAIAHGVMAD…VAVIAARTMG (108 aa)). Position 287 (Glu-287) interacts with Mg(2+). Substrate is bound by residues Arg-314 and 333–334 (SG). The Mg(2+) site is built by Gly-336, Gln-339, Gly-340, Pro-341, and Gly-344.

The protein belongs to the cyclic amide hydrolase (CyAH) family. In terms of assembly, homotetramer.

It carries out the reaction cyanurate + H2O = 1-carboxybiuret + H(+). It participates in xenobiotic degradation; atrazine degradation; biuret from cyanurate: step 1/1. With respect to regulation, inhibited by barbituric acid. In terms of biological role, responsible for the hydrolysis of cyanuric acid, an intermediate formed during catabolism of s-triazine based compounds in herbicides such as atrazine and polymers such as melamine. Catalyzes the hydrolytic opening of the s-triazine ring of cyanuric acid (2,4,6-trihydroxy-s-triazine) to yield carbon dioxide and carboxybiuret, which spontaneously decarboxylates to biuret. This is Cyanuric acid amidohydrolase from Azorhizobium caulinodans (strain ATCC 43989 / DSM 5975 / JCM 20966 / LMG 6465 / NBRC 14845 / NCIMB 13405 / ORS 571).